Here is a 356-residue protein sequence, read N- to C-terminus: MPREKPRADEIAIEMMSVCEDETEVEQDPRELYEEEMKEQQQIDCSKQQKEVVAIEELEKRNINKHFFSIQPNTQIPVISSNYIAPVDTSRLLVLIGKTKATYPIMKMFSLSVLAGMLLSVGGLLSITIGKGIPSSDIGIQKIVFGFFNSVGLNLVVLCGGELFTSNCAFLIPGFMEGAYSRWLFFKTHFVVYFGNLVGSIFVSTYFGKLLGSFESPMYLSAVKQIGETKVAMNWGRALLSGIGCNWLVCCAVYFSASAKDLLSKLVVISFLVLTFASLEFENCVGNMFLLSLSHMYGGNFTLGQWILNNLIPVSIGNFIGGTFLLGIPLWYVHVSNVYNIPFLDPLYQQSQAKTQ.

Residues 1–108 are Cytoplasmic-facing; sequence MPREKPRADE…TKATYPIMKM (108 aa). The chain crosses the membrane as a helical span at residues 109–129; the sequence is FSLSVLAGMLLSVGGLLSITI. Topologically, residues 130-142 are extracellular; that stretch reads GKGIPSSDIGIQK. Residues 143–163 traverse the membrane as a helical segment; that stretch reads IVFGFFNSVGLNLVVLCGGEL. Over 164 to 182 the chain is Cytoplasmic; the sequence is FTSNCAFLIPGFMEGAYSR. Residues 183–203 form a helical membrane-spanning segment; sequence WLFFKTHFVVYFGNLVGSIFV. At 204 to 237 the chain is on the extracellular side; it reads STYFGKLLGSFESPMYLSAVKQIGETKVAMNWGR. A helical transmembrane segment spans residues 238–258; sequence ALLSGIGCNWLVCCAVYFSAS. The Cytoplasmic segment spans residues 259–265; sequence AKDLLSK. Residues 266-286 form a helical membrane-spanning segment; that stretch reads LVVISFLVLTFASLEFENCVG. Topologically, residues 287-310 are extracellular; that stretch reads NMFLLSLSHMYGGNFTLGQWILNN. A helical membrane pass occupies residues 311–331; sequence LIPVSIGNFIGGTFLLGIPLW. Topologically, residues 332–356 are cytoplasmic; the sequence is YVHVSNVYNIPFLDPLYQQSQAKTQ.

The protein belongs to the FNT transporter (TC 1.A.16) family. Homopentamer.

It is found in the membrane. It catalyses the reaction (S)-lactate(in) + H(+)(in) = (S)-lactate(out) + H(+)(out). It carries out the reaction formate(in) + H(+)(in) = formate(out) + H(+)(out). The enzyme catalyses pyruvate(out) + H(+)(out) = pyruvate(in) + H(+)(in). The catalysed reaction is acetate(out) + H(+)(out) = acetate(in) + H(+)(in). Its function is as follows. Monocarboxylate-proton symporter; active in acidic-to-neutral pH range. Transports formate, acetate and L-lactate. This chain is Formate-nitrite transporter, found in Entamoeba histolytica (strain ATCC 30459 / HM-1:IMSS / ABRM).